The primary structure comprises 210 residues: Probable membrane protein MT1774 (210 aa).

Helical transmembrane passes span 43-63 and 165-185; these read AVVM…AAAA and ALAA…LLAL.

The protein localises to the cell membrane. The protein is Probable membrane protein MT1774 of Mycobacterium tuberculosis (strain CDC 1551 / Oshkosh).